Consider the following 93-residue polypeptide: YcgL domain-containing protein VFMJ11_1829 (93 aa).

Residues 1-84 (MFCSIYKSTK…PPENLLEKYK (84 aa)) form the YcgL domain.

The polypeptide is YcgL domain-containing protein VFMJ11_1829 (Aliivibrio fischeri (strain MJ11) (Vibrio fischeri)).